Reading from the N-terminus, the 143-residue chain is Large ribosomal subunit protein uL15 (143 aa).

The interval 1-45 is disordered; sequence MLLNTVQPGVGAKHAKRRVGRGIGSGLGKTCGRGHKGQKSRAGGF. The segment covering 21–31 has biased composition (gly residues); sequence RGIGSGLGKTC.

The protein belongs to the universal ribosomal protein uL15 family. As to quaternary structure, part of the 50S ribosomal subunit.

Functionally, binds to the 23S rRNA. This is Large ribosomal subunit protein uL15 from Chromobacterium violaceum (strain ATCC 12472 / DSM 30191 / JCM 1249 / CCUG 213 / NBRC 12614 / NCIMB 9131 / NCTC 9757 / MK).